Reading from the N-terminus, the 384-residue chain is Spermidine/putrescine import ATP-binding protein PotA (384 aa).

In terms of domain architecture, ABC transporter spans I26–I260. G62–T69 lines the ATP pocket.

It belongs to the ABC transporter superfamily. Spermidine/putrescine importer (TC 3.A.1.11.1) family. The complex is composed of two ATP-binding proteins (PotA), two transmembrane proteins (PotB and PotC) and a solute-binding protein (PotD).

It is found in the cell membrane. It catalyses the reaction ATP + H2O + polyamine-[polyamine-binding protein]Side 1 = ADP + phosphate + polyamineSide 2 + [polyamine-binding protein]Side 1.. Part of the ABC transporter complex PotABCD involved in spermidine/putrescine import. Responsible for energy coupling to the transport system. The chain is Spermidine/putrescine import ATP-binding protein PotA from Thermobifida fusca (strain YX).